We begin with the raw amino-acid sequence, 434 residues long: MGRVQLFEIRLSQGRVVYGPGEPLAGTVHLRLGAPLPFRAIRVTCMGSCGVSTKANDGAWVVEESYFNSSLSLADKGSLPAGEHNFPFQFLLPATAPTSFEGPFGKIVHQVRASIDTPRFSKDHKCSLVFYILSPLNLNSIPDIEQPNVASTTKKFSYKLVKTGNVVLTASTDLRGYVVGQVLRLQADIENQSGKDTSPVVASLLQKVSYKAKRWIYDVRTIAEVEGTGVKAWRRAQWQEQILVPALPQSALPGCSLIHIDYYLQVSMKAPEATVTLPLFVGNIAVNQTPLSPCPGRESSPGTLSLVVPSAPPQEEAEAVASGPHFSDPVSLSTKSHSQQQPLSAPLGSVSVTTTEPWVQVGSPARHSLHPPLCISIGATVPYFAEGSAGPVPTTSALILPPEYSSWGYPYEAPPSYEQSCGAAGTDLGLIPGS.

Residues 292–349 (SPCPGRESSPGTLSLVVPSAPPQEEAEAVASGPHFSDPVSLSTKSHSQQQPLSAPLGS) form a disordered region. Positions 330-343 (VSLSTKSHSQQQPL) are enriched in polar residues. 2 short sequence motifs (PPxY motif) span residues 401 to 404 (PPEY) and 414 to 417 (PPSY).

Belongs to the arrestin family. In terms of assembly, interacts (via PPxY motifs) with ITCH (via WW domains); the interaction is direct and participates in the recruitment of the ubiquitin-protein ligase ITCH to the NOTCH1 receptor. Interacts with ARRB1 and ARRB2; the interaction is direct. Interacts with TSG101; may recruit TSG101 to the plasma membrane. Interacts (via PPxY motifs) with WWP2 (via WW domains); ubiquitinates ARRDC1. Interacts with SLC11A2; controls the incorporation of SLC11A2 into extracellular vesicles through an ubiquitination-dependent mechanism. Interacts with WWP1 (via WW domains). Interacts with NEDD4 (via WW domains). Interacts with PDCD6IP. Post-translationally, ubiquitinated. Ubiquitination by WWP2; promotes localization to extracellular microvesicles. Ubiquitinated by WWP1.

It localises to the cell membrane. Functions as an adapter recruiting ubiquitin-protein ligases to their specific substrates. Through an ubiquitination-dependent mechanism plays for instance a role in the incorporation of SLC11A2 into extracellular vesicles. More generally, plays a role in the extracellular transport of proteins between cells through the release in the extracellular space of microvesicles. By participating to the ITCH-mediated ubiquitination and subsequent degradation of NOTCH1, negatively regulates the NOTCH signaling pathway. The protein is Arrestin domain-containing protein 1 of Mus musculus (Mouse).